Reading from the N-terminus, the 568-residue chain is Natural resistance-associated macrophage protein 2 (568 aa).

The segment covering 1-20 (MVLDPKEKMPDDGASGDHGD) has biased composition (basic and acidic residues). Positions 1–45 (MVLDPKEKMPDDGASGDHGDSASLGAINPAYSNSSLPHSTGDSEE) are disordered. The Cytoplasmic portion of the chain corresponds to 1–69 (MVLDPKEKMP…EEYSCFSFRK (69 aa)). Polar residues predominate over residues 30–40 (AYSNSSLPHST). A helical membrane pass occupies residues 70 to 90 (LWAFTGPGFLMSIAYLDPGNI). Over 91 to 95 (ESDLQ) the chain is Extracellular. The chain crosses the membrane as a helical span at residues 96–117 (SGAVAGFKLLWVLLLATIVGLL). At 118-154 (LQRLAARLGVVTGLHLAEVCHRQYPKVPRIILWLMVE) the chain is on the cytoplasmic side. Residues 155–175 (LAIIGSDMQEVIGSAIAINLL) traverse the membrane as a helical segment. Over 176-179 (SAGR) the chain is Extracellular. Residues 180–194 (VPLWGGVLITIADTF) form a helical membrane-spanning segment. Residues 195 to 208 (VFLFLDKYGLRKLE) are Cytoplasmic-facing. Residues 209 to 229 (AFFGFLITIMALTFGYEYITV) traverse the membrane as a helical segment. Residues 230–255 (KPSQSQVLRGMFVPSCPGCRTPQVEQ) lie on the Extracellular side of the membrane. A helical transmembrane segment spans residues 256–276 (AVGIVGAVIMPHNMYLHSALV). At 277 to 301 (KSRQVNRANKQEVREANKYFFIESC) the chain is on the cytoplasmic side. The chain crosses the membrane as a helical span at residues 302-322 (IALFVSFIINVFVVSVFAEAF). At 323-360 (FEKTNKQVVEVCKNNSSPHADLFPSDNSTLAVDIYKGG) the chain is on the extracellular side. Residues asparagine 336 and asparagine 349 are each glycosylated (N-linked (GlcNAc...) asparagine). A helical transmembrane segment spans residues 361-381 (VVLGCYFGPAALYIWAVGILA). Residues 382-408 (AGQSSTMTGTYSGQFVMEGFLNLKWSR) lie on the Cytoplasmic side of the membrane. A helical membrane pass occupies residues 409–429 (FARVILTRSIAIIPTLLVAVF). The Extracellular segment spans residues 430 to 440 (QDVEHLTGMND). Residues 441-461 (FLNVLQSLQLPFALIPILTFT) form a helical membrane-spanning segment. Over 462–482 (SLRPVMSEFSNGIGWRIAGGI) the chain is Cytoplasmic. A helical membrane pass occupies residues 483 to 503 (LVLIVCSINMYFVVVYVQELG). Topologically, residues 504-506 (HVA) are extracellular. A helical membrane pass occupies residues 507 to 527 (LYVVAAVVSVAYLTFVFYLGW). The Cytoplasmic portion of the chain corresponds to 528-568 (QCLIALGLSFLDCGRSYRLGLTAQPELYLLNTVDADSVVSR). A required for early endosome targeting region spans residues 555 to 559 (YLLNT). Residues leucine 556, serine 564, and serine 567 each carry the phosphoserine modification.

This sequence belongs to the NRAMP family. Forms a complex with NDFIP1 and NEDD4L, in cortical neurons, in response to iron and cobalt exposure; this interaction leads to SLC11A2 ubiquitination by NEDD4L and proteasome-dependent degradation. Interacts with NDFIP1, NDFIP2 and WWP2; this interaction leads to SLC11A2 ubiquitination by WWP2 and subsequent proteasome-dependent degradation. Interacts with COX2 and TOM6 at the outer mitochondrion membrane. Interacts with ARRDC1; this interaction regulates the incorporation of SLC11A2 into extracellular vesicles through an ubiquitination-dependent mechanism. Interacts with ARRDC4; controls the incorporation of SLC11A2 into extracellular vesicles through an ubiquitination-dependent mechanism. Post-translationally, ubiquitinated by WWP2. N-glycosylated. In terms of tissue distribution, abundantly expressed in erythroid precursor cells (at protein level). Expressed in duodenum (at protein level).

The protein resides in the golgi apparatus. It is found in the trans-Golgi network membrane. The protein localises to the early endosome membrane. Its subcellular location is the recycling endosome membrane. It localises to the cell membrane. The protein resides in the late endosome membrane. It is found in the lysosome membrane. The protein localises to the apical cell membrane. Its subcellular location is the mitochondrion outer membrane. It localises to the extracellular vesicle membrane. The enzyme catalyses Fe(2+)(in) + H(+)(in) = Fe(2+)(out) + H(+)(out). The catalysed reaction is Co(2+)(out) + H(+)(out) = Co(2+)(in) + H(+)(in). It catalyses the reaction Cd(2+)(out) + H(+)(out) = Cd(2+)(in) + H(+)(in). It carries out the reaction Mn(2+)(in) + H(+)(in) = Mn(2+)(out) + H(+)(out). The enzyme catalyses Zn(2+)(out) + H(+)(out) = Zn(2+)(in) + H(+)(in). The catalysed reaction is Ni(2+)(out) + H(+)(out) = Ni(2+)(in) + H(+)(in). It catalyses the reaction H(+)(in) = H(+)(out). It carries out the reaction Fe(2+)(in) = Fe(2+)(out). Proton-coupled metal ion symporter operating with a proton to metal ion stoichiometry of 1:1. Selectively transports various divalent metal cations, in decreasing affinity: Cd(2+) &gt; Fe(2+) &gt; Co(2+), Mn(2+) &gt;&gt; Zn(2+), Ni(2+), VO(2+). Essential for maintenance of iron homeostasis by modulating intestinal absorption of dietary Fe(2+) and TF-associated endosomal Fe(2+) transport in erythroid precursors and other cells. Enables Fe(2+) and Mn(2+) ion entry into mitochondria, and is thus expected to promote mitochondrial heme synthesis, iron-sulfur cluster biogenesis and antioxidant defense. Can mediate uncoupled fluxes of either protons or metal ions. The polypeptide is Natural resistance-associated macrophage protein 2 (Slc11a2) (Mus musculus (Mouse)).